Reading from the N-terminus, the 176-residue chain is Ribosome maturation factor RimM (176 aa).

Residues Lys-99–Asn-174 enclose the PRC barrel domain.

Belongs to the RimM family. As to quaternary structure, binds ribosomal protein uS19.

Its subcellular location is the cytoplasm. In terms of biological role, an accessory protein needed during the final step in the assembly of 30S ribosomal subunit, possibly for assembly of the head region. Essential for efficient processing of 16S rRNA. May be needed both before and after RbfA during the maturation of 16S rRNA. It has affinity for free ribosomal 30S subunits but not for 70S ribosomes. The polypeptide is Ribosome maturation factor RimM (Leptospira borgpetersenii serovar Hardjo-bovis (strain JB197)).